The following is a 556-amino-acid chain: Potassium-transporting ATPase potassium-binding subunit (556 aa).

Transmembrane regions (helical) follow at residues 6–26 (AGIL…VPLG), 65–85 (SVLA…LLQG), 133–153 (GLSV…MAFV), 176–196 (LRIL…GGVI), 249–269 (PTTW…FSLP), 283–303 (AAIL…MMLF), 378–398 (GLYS…LMVG), 419–439 (YFLV…ALPG), 483–503 (ALGL…LALA), and 526–546 (FVGM…LPVL).

It belongs to the KdpA family. As to quaternary structure, the system is composed of three essential subunits: KdpA, KdpB and KdpC.

It is found in the cell membrane. Functionally, part of the high-affinity ATP-driven potassium transport (or Kdp) system, which catalyzes the hydrolysis of ATP coupled with the electrogenic transport of potassium into the cytoplasm. This subunit binds the extracellular potassium ions and delivers the ions to the membrane domain of KdpB through an intramembrane tunnel. The polypeptide is Potassium-transporting ATPase potassium-binding subunit (Mycobacterium sp. (strain KMS)).